The primary structure comprises 263 residues: Urease accessory protein UreD 1 (263 aa).

It belongs to the UreD family. In terms of assembly, ureD, UreF and UreG form a complex that acts as a GTP-hydrolysis-dependent molecular chaperone, activating the urease apoprotein by helping to assemble the nickel containing metallocenter of UreC. The UreE protein probably delivers the nickel.

It localises to the cytoplasm. In terms of biological role, required for maturation of urease via the functional incorporation of the urease nickel metallocenter. The polypeptide is Urease accessory protein UreD 1 (Synechococcus sp. (strain JA-3-3Ab) (Cyanobacteria bacterium Yellowstone A-Prime)).